We begin with the raw amino-acid sequence, 159 residues long: Cyclic pyranopterin monophosphate synthase (159 aa).

Residues 75 to 77 (LCH) and 113 to 114 (ME) each bind substrate. The active site involves Asp-128.

It belongs to the MoaC family. Homohexamer; trimer of dimers.

It carries out the reaction (8S)-3',8-cyclo-7,8-dihydroguanosine 5'-triphosphate = cyclic pyranopterin phosphate + diphosphate. It participates in cofactor biosynthesis; molybdopterin biosynthesis. In terms of biological role, catalyzes the conversion of (8S)-3',8-cyclo-7,8-dihydroguanosine 5'-triphosphate to cyclic pyranopterin monophosphate (cPMP). This is Cyclic pyranopterin monophosphate synthase from Cupriavidus metallidurans (strain ATCC 43123 / DSM 2839 / NBRC 102507 / CH34) (Ralstonia metallidurans).